The chain runs to 179 residues: Putative FBD-associated F-box protein At3g12840 (179 aa).

The region spanning 14 to 60 (AARINDLPDDLLATVLSFVPTKDAVATSILSKRWRPIWKRAVNLESD) is the F-box domain. One can recognise an FBD domain in the interval 101–152 (KWKQPDFVPLSLYRSLEAFEWIGFKGREKTEKKAAFHILRNACNLKTMAITT).

This Arabidopsis thaliana (Mouse-ear cress) protein is Putative FBD-associated F-box protein At3g12840.